A 200-amino-acid polypeptide reads, in one-letter code: Rho GDP-dissociation inhibitor 2 (200 aa).

The tract at residues 1 to 39 (MTEKDAQPQLEEADDDLDSKLNYKPPPQKSLKELQEMDK) is disordered. T2 carries the N-acetylthreonine modification. The residue at position 20 (K20) is an N6-acetyllysine. Residue Y23 is modified to Phosphotyrosine. K24, K39, K46, K101, and K123 each carry N6-acetyllysine. Over residues 30 to 39 (SLKELQEMDK) the composition is skewed to basic and acidic residues. At S144 the chain carries Phosphoserine. At K174 the chain carries N6-acetyllysine.

Belongs to the Rho GDI family. Interacts with RHOA. Interacts with RAC1. Interacts with RAC2. Interacts with CDC42. In terms of tissue distribution, preferentially expressed in hematopoietic cells.

It localises to the cytoplasm. The protein resides in the cytosol. Regulates the GDP/GTP exchange reaction of the Rho proteins by inhibiting the dissociation of GDP from them, and the subsequent binding of GTP to them. Regulates reorganization of the actin cytoskeleton mediated by Rho family members. This is Rho GDP-dissociation inhibitor 2 (Arhgdib) from Mus musculus (Mouse).